The primary structure comprises 109 residues: ATP-dependent Clp protease adapter protein ClpS (109 aa).

A disordered region spans residues 1–23; that stretch reads MTERKHDDTGVEEGTGLATKTRP.

This sequence belongs to the ClpS family. Binds to the N-terminal domain of the chaperone ClpA.

Involved in the modulation of the specificity of the ClpAP-mediated ATP-dependent protein degradation. This chain is ATP-dependent Clp protease adapter protein ClpS, found in Maricaulis maris (strain MCS10) (Caulobacter maris).